The following is a 162-amino-acid chain: Cytochrome c-type biogenesis protein CcmE (162 aa).

The Cytoplasmic segment spans residues M1–R8. The helical; Signal-anchor for type II membrane protein transmembrane segment at L9 to A29 threads the bilayer. Topologically, residues L30–K162 are periplasmic. Residues H131 and Y135 each coordinate heme. The disordered stretch occupies residues E142–K162. Polar residues predominate over residues Y153–K162.

Belongs to the CcmE/CycJ family.

It is found in the cell inner membrane. Functionally, heme chaperone required for the biogenesis of c-type cytochromes. Transiently binds heme delivered by CcmC and transfers the heme to apo-cytochromes in a process facilitated by CcmF and CcmH. The chain is Cytochrome c-type biogenesis protein CcmE from Shewanella baltica (strain OS223).